The primary structure comprises 459 residues: Cyclic GMP-AMP synthase-like receptor 2 (459 aa).

ATP is bound by residues Ser68 and 79–81 (EFD). Mg(2+)-binding residues include Glu79, Asp81, and Asp199. GTP contacts are provided by residues Asp199 and 248–255 (RSSFYAVE). Residue 252-255 (YAVE) coordinates ATP. His263 is a Zn(2+) binding site. Residues Lys274 and 288-292 (SYYIK) contribute to the ATP site.

The protein belongs to the mab-21 family. Requires Mg(2+) as cofactor. Mn(2+) is required as a cofactor.

The catalysed reaction is GTP + ATP = 3',2'-cGAMP + 2 diphosphate. It carries out the reaction GTP + ATP = 2',3'-cGAMP + 2 diphosphate. It catalyses the reaction GTP + ATP = pppGp(2'-5')A + diphosphate. The enzyme catalyses pppA(2'-5')pG = 3',2'-cGAMP + diphosphate. The catalysed reaction is pppGp(2'-5')A = 2',3'-cGAMP + diphosphate. With respect to regulation, the enzyme activity is specifically activated by some nucleic acid. Functionally, nucleotidyltransferase that catalyzes the formation of cyclic GMP-AMP from ATP and GTP and plays a key role in antiviral innate immunity. Directly binds some unknown nucleic acid, activating the nucleotidyltransferase activity, leading to synthesis of both 3',2'-cGAMP and 2',3'-cGAMP second messengers. 3',2'-cGAMP and 2',3'-cGAMP bind to and activate Sting, thereby triggering the antiviral immune response via activation of the NF-kappa-B transcription factor Rel (Relish). The polypeptide is Cyclic GMP-AMP synthase-like receptor 2 (Drosophila melanogaster (Fruit fly)).